Consider the following 223-residue polypeptide: Large ribosomal subunit protein bL25 (223 aa).

Residues 198-223 (EEIGDRPRSAEEGAAPVKERKLRESE) are disordered.

Belongs to the bacterial ribosomal protein bL25 family. CTC subfamily. In terms of assembly, part of the 50S ribosomal subunit; part of the 5S rRNA/L5/L18/L25 subcomplex. Contacts the 5S rRNA. Binds to the 5S rRNA independently of L5 and L18.

Its function is as follows. This is one of the proteins that binds to the 5S RNA in the ribosome where it forms part of the central protuberance. The sequence is that of Large ribosomal subunit protein bL25 from Thermomicrobium roseum (strain ATCC 27502 / DSM 5159 / P-2).